A 78-amino-acid chain; its full sequence is Large ribosomal subunit protein bL28 (78 aa).

The segment at 1–31 (MAAHCQVTGAEPGFGHSISHSHRRNKRRFDP) is disordered.

Belongs to the bacterial ribosomal protein bL28 family.

This chain is Large ribosomal subunit protein bL28, found in Arthrobacter sp. (strain FB24).